Here is a 311-residue protein sequence, read N- to C-terminus: tRNA dimethylallyltransferase (311 aa).

ATP is bound at residue 11-18 (GPTAVGKT). Residue 13 to 18 (TAVGKT) participates in substrate binding. The interaction with substrate tRNA stretch occupies residues 36-39 (DSVQ).

This sequence belongs to the IPP transferase family. Monomer. The cofactor is Mg(2+).

It carries out the reaction adenosine(37) in tRNA + dimethylallyl diphosphate = N(6)-dimethylallyladenosine(37) in tRNA + diphosphate. Its function is as follows. Catalyzes the transfer of a dimethylallyl group onto the adenine at position 37 in tRNAs that read codons beginning with uridine, leading to the formation of N6-(dimethylallyl)adenosine (i(6)A). In Exiguobacterium sp. (strain ATCC BAA-1283 / AT1b), this protein is tRNA dimethylallyltransferase.